The sequence spans 305 residues: Ribosomal RNA small subunit methyltransferase H (305 aa).

S-adenosyl-L-methionine is bound by residues 49 to 51 (GGH), aspartate 68, phenylalanine 100, aspartate 116, and glutamine 123.

It belongs to the methyltransferase superfamily. RsmH family.

The protein localises to the cytoplasm. It carries out the reaction cytidine(1402) in 16S rRNA + S-adenosyl-L-methionine = N(4)-methylcytidine(1402) in 16S rRNA + S-adenosyl-L-homocysteine + H(+). Its function is as follows. Specifically methylates the N4 position of cytidine in position 1402 (C1402) of 16S rRNA. In Synechocystis sp. (strain ATCC 27184 / PCC 6803 / Kazusa), this protein is Ribosomal RNA small subunit methyltransferase H.